Here is a 347-residue protein sequence, read N- to C-terminus: Iron-sulfur cluster assembly protein SufC (347 aa).

Residues 100 to 346 form the ABC transporter domain; the sequence is LEIKDLHAIE…ENKGYSQFLK (247 aa). 134–141 contacts ATP; the sequence is GRNGSGKS.

It belongs to the ABC transporter superfamily. Ycf16 family. In terms of assembly, component of a complex composed of SufB, SufC and SufD in a stoichiometric ratio of 1:2:1. Interacts with SufB. Interacts with SufD; the interaction enhances the ATPase activity of SufC. Proteolytically cleaved.

The protein resides in the plastid. It is found in the apicoplast. The catalysed reaction is ATP + H2O = ADP + phosphate + H(+). It participates in cofactor biosynthesis; iron-sulfur cluster biosynthesis. Its function is as follows. Participates in the sulfur mobilization (SUF) pathway for iron-sulfur (Fe-S) cluster biogenesis. As part of a complex consisting of SufB-SufC(2)-SufD, involved in assembly of [4Fe-4S] clusters. Exhibits ATPase activity. The chain is Iron-sulfur cluster assembly protein SufC from Plasmodium falciparum (isolate 3D7).